A 90-amino-acid polypeptide reads, in one-letter code: Long neurotoxin 7 (90 aa).

The signal sequence occupies residues 1 to 21 (MKTLLLTLVLVTIMCLDLGYT). 5 cysteine pairs are disulfide-bonded: Cys-24–Cys-41, Cys-35–Cys-62, Cys-47–Cys-51, Cys-66–Cys-77, and Cys-78–Cys-83.

This sequence belongs to the three-finger toxin family. Long-chain subfamily. Type II alpha-neurotoxin sub-subfamily. In terms of tissue distribution, expressed by the venom gland.

It localises to the secreted. Its function is as follows. Binds with high affinity to muscular (alpha-1/CHRNA1) and neuronal (alpha-7/CHRNA7) nicotinic acetylcholine receptor (nAChR) and inhibits acetylcholine from binding to the receptor, thereby impairing neuromuscular and neuronal transmission. The sequence is that of Long neurotoxin 7 from Naja sputatrix (Malayan spitting cobra).